A 122-amino-acid polypeptide reads, in one-letter code: Small ribosomal subunit protein uS13 (122 aa).

The disordered stretch occupies residues 97–122; that stretch reads PVRGQRTHTNAKTRKGRSKLPIAGKK.

This sequence belongs to the universal ribosomal protein uS13 family. In terms of assembly, part of the 30S ribosomal subunit. Forms a loose heterodimer with protein S19. Forms two bridges to the 50S subunit in the 70S ribosome.

In terms of biological role, located at the top of the head of the 30S subunit, it contacts several helices of the 16S rRNA. In the 70S ribosome it contacts the 23S rRNA (bridge B1a) and protein L5 of the 50S subunit (bridge B1b), connecting the 2 subunits; these bridges are implicated in subunit movement. Contacts the tRNAs in the A and P-sites. This Wolbachia pipientis subsp. Culex pipiens (strain wPip) protein is Small ribosomal subunit protein uS13.